The chain runs to 247 residues: uncharacterized protein (247 aa).

Residues 1–35 form the signal peptide; that stretch reads MWGPGVTAEGLSVAPAPPPLLPLLLLLALALVAPS. N-linked (GlcNAc...) asparagine glycosylation is present at Asn-57. The chain crosses the membrane as a helical span at residues 82–102; it reads LSGLLILLVLFAIGYFLQRII. A disordered region spans residues 109-179; sequence YPRGQARPGQ…GGRSDPSCAS (71 aa). A compositionally biased stretch (gly residues) spans 160–172; it reads SGGGGRGRGGGGR.

The protein resides in the membrane. This is an uncharacterized protein from Homo sapiens (Human).